The chain runs to 327 residues: Phospho-N-acetylmuramoyl-pentapeptide-transferase (327 aa).

10 consecutive transmembrane segments (helical) span residues 3-23, 51-71, 79-99, 115-135, 140-160, 172-192, 197-217, 223-243, 248-268, and 306-326; these read TAII…PAFI, TMGG…IALF, VTTI…DDFL, LFLQ…HGGG, VFGF…FWLV, IDGL…VIAL, FDLL…FGFN, IFMG…LSIA, WTLL…MLQV, and VDFL…AILY.

This sequence belongs to the glycosyltransferase 4 family. MraY subfamily. Requires Mg(2+) as cofactor.

The protein localises to the cell membrane. It catalyses the reaction UDP-N-acetyl-alpha-D-muramoyl-L-alanyl-gamma-D-glutamyl-L-lysyl-D-alanyl-D-alanine + di-trans,octa-cis-undecaprenyl phosphate = Mur2Ac(oyl-L-Ala-gamma-D-Glu-L-Lys-D-Ala-D-Ala)-di-trans,octa-cis-undecaprenyl diphosphate + UMP. It functions in the pathway cell wall biogenesis; peptidoglycan biosynthesis. Catalyzes the initial step of the lipid cycle reactions in the biosynthesis of the cell wall peptidoglycan: transfers peptidoglycan precursor phospho-MurNAc-pentapeptide from UDP-MurNAc-pentapeptide onto the lipid carrier undecaprenyl phosphate, yielding undecaprenyl-pyrophosphoryl-MurNAc-pentapeptide, known as lipid I. In Streptococcus gordonii (strain Challis / ATCC 35105 / BCRC 15272 / CH1 / DL1 / V288), this protein is Phospho-N-acetylmuramoyl-pentapeptide-transferase.